The chain runs to 300 residues: Haloalkane dehalogenase (300 aa).

One can recognise an AB hydrolase-1 domain in the interval 32–155 (AIVFQHGNPT…PAVRGVFQGF (124 aa)). The Nucleophile role is filled by D109. The active-site Proton donor is the E133. H273 serves as the catalytic Proton acceptor.

This sequence belongs to the haloalkane dehalogenase family. Type 2 subfamily. As to quaternary structure, monomer.

It carries out the reaction 1-haloalkane + H2O = a halide anion + a primary alcohol + H(+). Catalyzes hydrolytic cleavage of carbon-halogen bonds in halogenated aliphatic compounds, leading to the formation of the corresponding primary alcohols, halide ions and protons. The chain is Haloalkane dehalogenase from Mycobacterium bovis (strain ATCC BAA-935 / AF2122/97).